The following is a 366-amino-acid chain: Ferredoxin--NADP reductase (366 aa).

Positions 51, 59, 64, 104, 139, 308, and 349 each coordinate FAD.

This sequence belongs to the ferredoxin--NADP reductase type 2 family. In terms of assembly, homodimer. FAD serves as cofactor.

It carries out the reaction 2 reduced [2Fe-2S]-[ferredoxin] + NADP(+) + H(+) = 2 oxidized [2Fe-2S]-[ferredoxin] + NADPH. The chain is Ferredoxin--NADP reductase from Polaromonas naphthalenivorans (strain CJ2).